The sequence spans 623 residues: MPHSDELDSRDVLSVSGLNIAFHHEGQQVDAVRNVSLRLKRGETLAIVGESGSGKSVTALALMRLIEQSGANVRCGEMLLRRRNRQVIELSEQSDAQMRRVRGADIAMIFQEPMTSLNPVFTVGEQIAESIRLHQRASHEEALAEAKRMLDQVRIPESQAILSRYPHQLSGGMRQRVMIAMALSCRPAVLIADEPTTALDVTIQAQILQLIKVLQQEMSMGVIFITHDMGVVADIADRVLVMYQGEAVETGSVEQIFHAPTHPYTQTLLAAVPQLGAMRGHSLPRRFPLISADEPALYESQIEQDTVVEGEPILQVRGLVTRFPLRSGLFNRVTREVHAVENISFDLWPGETLSLVGESGSGKSTTGRALLRLVESRQGEIIFNGQRIDTLSAGKLQPLRRDIQCIFQDPYASLDPRQTVGYSIMEPLRIHGLGQGDAAAKRVAWLLERVGLRPEHAWRYPHEFSGGQRQRICIARALALNPKVIIADEAVSALDVSVRGQIINLLLDLQREMGIAYLFISHDMAVVERISHRVAVMYLGQIVEMGPRRAVFENPQHPYTRKLMAAVPVADPSRHRPRRVLLSDDIPSNIHKRGEETPAVSLQLVGPGHYVARPLQDNALSRL.

ABC transporter domains are found at residues 15 to 269 (VSGL…QTLL) and 325 to 564 (LRSG…RKLM). ATP-binding positions include 49-56 (GESGSGKS) and 357-364 (GESGSGKS).

The protein belongs to the ABC transporter superfamily. Glutathione importer (TC 3.A.1.5.11) family. As to quaternary structure, the complex is composed of two ATP-binding proteins (GsiA), two transmembrane proteins (GsiC and GsiD) and a solute-binding protein (GsiB).

It is found in the cell inner membrane. It catalyses the reaction glutathione(out) + ATP + H2O = glutathione(in) + ADP + phosphate + H(+). Functionally, part of the ABC transporter complex GsiABCD involved in glutathione import. Responsible for energy coupling to the transport system. The protein is Glutathione import ATP-binding protein GsiA of Salmonella choleraesuis (strain SC-B67).